The chain runs to 89 residues: Small ribosomal subunit protein uS15 (89 aa).

This sequence belongs to the universal ribosomal protein uS15 family. Part of the 30S ribosomal subunit. Forms a bridge to the 50S subunit in the 70S ribosome, contacting the 23S rRNA.

In terms of biological role, one of the primary rRNA binding proteins, it binds directly to 16S rRNA where it helps nucleate assembly of the platform of the 30S subunit by binding and bridging several RNA helices of the 16S rRNA. Forms an intersubunit bridge (bridge B4) with the 23S rRNA of the 50S subunit in the ribosome. The protein is Small ribosomal subunit protein uS15 of Paraburkholderia phymatum (strain DSM 17167 / CIP 108236 / LMG 21445 / STM815) (Burkholderia phymatum).